Consider the following 628-residue polypeptide: Chaperone protein HtpG (628 aa).

An a; substrate-binding region spans residues Met1–Arg337. A b region spans residues Glu338–Lys554. The interval Met555–Arg628 is c.

This sequence belongs to the heat shock protein 90 family. In terms of assembly, homodimer.

Its subcellular location is the cytoplasm. Functionally, molecular chaperone. Has ATPase activity. This is Chaperone protein HtpG from Francisella tularensis subsp. novicida (strain U112).